A 281-amino-acid polypeptide reads, in one-letter code: Beta-lactamase (281 aa).

A signal peptide spans 1–24; the sequence is MKKLIFLIVIALVLSACNSNSSHA. The Acyl-ester intermediate role is filled by serine 63. A substrate-binding site is contributed by 225 to 227; the sequence is KSG.

It belongs to the class-A beta-lactamase family.

It carries out the reaction a beta-lactam + H2O = a substituted beta-amino acid. This is Beta-lactamase (blaZ) from Staphylococcus aureus.